The chain runs to 721 residues: BRCA1-A complex subunit RAP80 (721 aa).

The disordered stretch occupies residues 1–65 (MPRRKKKGKE…GLQKTKIKQS (65 aa)). The segment at 1 to 101 (MPRRKKKGKE…SEQEAREVNS (101 aa)) is necessary for transcriptional repression. Lys-20 participates in a covalent cross-link: Glycyl lysine isopeptide (Lys-Gly) (interchain with G-Cter in SUMO2). Ser-29 carries the post-translational modification Phosphoserine. A Glycyl lysine isopeptide (Lys-Gly) (interchain with G-Cter in SUMO2) cross-link involves residue Lys-31. Phosphoserine occurs at positions 44 and 46. The LR motif motif lies at 60–78 (TKIKQSSRAKCLAKRKIAQ). Glycyl lysine isopeptide (Lys-Gly) (interchain with G-Cter in SUMO2) cross-links involve residues Lys-75 and Lys-90. The UIM 1 domain maps to 80-99 (TEEEQFALALKMSEQEAREV). The disordered stretch occupies residues 93–204 (EQEAREVNSQ…SVSSGSWDQS (112 aa)). Residues 97–103 (REVNSQE) are UIM-linker. The segment at 100–200 (NSQEEEEEEL…EEPVSVSSGS (101 aa)) is necessary for interaction with NR6A1 N-terminus. The residue at position 101 (Ser-101) is a Phosphoserine. The UIM 2 domain maps to 105-124 (EEEELLRKAIAESLNSCRPS). Polar residues predominate over residues 117-130 (SLNSCRPSDASATR). The residue at position 140 (Ser-140) is a Phosphoserine. Positions 194–204 (VSVSSGSWDQS) are enriched in low complexity. At Ser-205 the chain carries Phosphoserine. Lys-245 is covalently cross-linked (Glycyl lysine isopeptide (Lys-Gly) (interchain with G-Cter in SUMO2)). The AIR stretch occupies residues 270–400 (TGGTVNYFWG…EEEPTTSHGQ (131 aa)). A disordered region spans residues 334–369 (NECGQGEQASEKNEGISEDMGDEDKEERQESRASVW). Positions 349-358 (ISEDMGDEDK) are enriched in acidic residues. Residues Lys-382 and Lys-387 each participate in a glycyl lysine isopeptide (Lys-Gly) (interchain with G-Cter in SUMO2) cross-link. Residues 391–418 (EEEPTTSHGQSSQGLFVEETSEEGNSVP) form a disordered region. Positions 400-500 (QSSQGLFVEE…EIHTSTFSSS (101 aa)) are necessary for interaction with NR6A1 C-terminus. A phosphoserine mark is found at Ser-402 and Ser-420. Residue Lys-429 forms a Glycyl lysine isopeptide (Lys-Gly) (interchain with G-Cter in SUMO2) linkage. Ser-467 carries the post-translational modification Phosphoserine. The UBZ4-type zinc-finger motif lies at 502-529 (QVSCPLCDQGFPPTKIERHAMYCNGLMG). Zn(2+) is bound by residues Cys-505, Cys-508, His-520, and Cys-524. The segment at 505 to 582 (CPLCDQGFPP…REYQCHVESC (78 aa)) is zinc-finger-like region. Glycyl lysine isopeptide (Lys-Gly) (interchain with G-Cter in SUMO2) cross-links involve residues Lys-544, Lys-559, Lys-562, and Lys-607. Residue Ser-627 is modified to Phosphoserine. Residues Lys-635 and Lys-642 each participate in a glycyl lysine isopeptide (Lys-Gly) (interchain with G-Cter in SUMO2) cross-link. Phosphoserine occurs at positions 655 and 679. Residues Lys-698 and Lys-699 each participate in a glycyl lysine isopeptide (Lys-Gly) (interchain with G-Cter in SUMO2) cross-link.

The protein belongs to the RAP80 family. As to quaternary structure, component of the ARISC complex, at least composed of UIMC1/RAP80, ABRAXAS1, BRCC3/BRCC36, BABAM2 and BABAM1/NBA1. Component of the BRCA1-A complex, at least composed of the BRCA1, BARD1, UIMC1/RAP80, ABRAXAS1, BRCC3/BRCC36, BABAM2 and BABAM1/NBA1. In the BRCA1-A complex, interacts directly with ABRAXAS1. Interacts with UBE2I. Interacts with NR6A1. Interacts with ESR1. Interacts with TSP57. Interacts with TRAIP. Post-translationally, sumoylated. Phosphorylated upon DNA damage by ATM or ATR.

The protein localises to the nucleus. Its function is as follows. Ubiquitin-binding protein. Specifically recognizes and binds 'Lys-63'-linked ubiquitin. Plays a central role in the BRCA1-A complex by specifically binding 'Lys-63'-linked ubiquitinated histones H2A and H2AX at DNA lesions sites, leading to target the BRCA1-BARD1 heterodimer to sites of DNA damage at double-strand breaks (DSBs). The BRCA1-A complex also possesses deubiquitinase activity that specifically removes 'Lys-63'-linked ubiquitin on histones H2A and H2AX. Also weakly binds monoubiquitin but with much less affinity than 'Lys-63'-linked ubiquitin. May interact with monoubiquitinated histones H2A and H2B; the relevance of such results is however unclear in vivo. Does not bind Lys-48'-linked ubiquitin. May indirectly act as a transcriptional repressor by inhibiting the interaction of NR6A1 with the corepressor NCOR1. The chain is BRCA1-A complex subunit RAP80 (UIMC1) from Sus scrofa (Pig).